Consider the following 278-residue polypeptide: HTH-type transcriptional activator RhaS (278 aa).

Positions 174–272 (NQLMAWLEDH…NWSPRDIRQG (99 aa)) constitute an HTH araC/xylS-type domain. 2 consecutive DNA-binding regions (H-T-H motif) follow at residues 191 to 212 (EAVAEQFSLSLRTLHRQLKQHT) and 239 to 262 (VTEIAYRCGFGDSNHFSTLFRREF).

In terms of assembly, binds DNA as a dimer.

The protein resides in the cytoplasm. Functionally, activates expression of the rhaBAD and rhaT operons. The sequence is that of HTH-type transcriptional activator RhaS from Salmonella enteritidis PT4 (strain P125109).